Reading from the N-terminus, the 190-residue chain is Ribosome maturation factor RimM (190 aa).

In terms of domain architecture, PRC barrel spans 95–177 (EDDEFFYTDL…AGLIDSPDDL (83 aa)). The tract at residues 170-190 (LIDSPDDLTGKPPKPPGKTKE) is disordered. Residues 181-190 (PPKPPGKTKE) are compositionally biased toward pro residues.

Belongs to the RimM family. Binds ribosomal protein uS19.

Its subcellular location is the cytoplasm. Functionally, an accessory protein needed during the final step in the assembly of 30S ribosomal subunit, possibly for assembly of the head region. Essential for efficient processing of 16S rRNA. May be needed both before and after RbfA during the maturation of 16S rRNA. It has affinity for free ribosomal 30S subunits but not for 70S ribosomes. This chain is Ribosome maturation factor RimM, found in Rhizobium rhizogenes (strain K84 / ATCC BAA-868) (Agrobacterium radiobacter).